The primary structure comprises 211 residues: Beta-crystallin B3 (211 aa).

Residues methionine 1–glycine 21 are disordered. An N-terminal arm region spans residues methionine 1 to asparagine 23. 2 Beta/gamma crystallin 'Greek key' domains span residues tyrosine 24–serine 63 and glycine 64–glutamine 108. The connecting peptide stretch occupies residues isoleucine 109–aspartate 113. Beta/gamma crystallin 'Greek key' domains lie at histidine 114–asparagine 155 and glycine 156–arginine 198. The interval glutamine 200–serine 211 is C-terminal arm.

This sequence belongs to the beta/gamma-crystallin family. Homo/heterodimer, or complexes of higher-order. The structure of beta-crystallin oligomers seems to be stabilized through interactions between the N-terminal arms.

Crystallins are the dominant structural components of the vertebrate eye lens. This is Beta-crystallin B3 (CRYBB3) from Gallus gallus (Chicken).